Consider the following 228-residue polypeptide: Endo-1,4-beta-xylanase A (228 aa).

Residues 1 to 27 (MNLRKLRLLFVMCIGLTLILTAVPAHA) form the signal peptide. The GH11 domain occupies 29–222 (TITNNEMGNH…SSGSANVMTN (194 aa)). E120 acts as the Nucleophile in catalysis. Catalysis depends on E209, which acts as the Proton donor.

This sequence belongs to the glycosyl hydrolase 11 (cellulase G) family.

The catalysed reaction is Endohydrolysis of (1-&gt;4)-beta-D-xylosidic linkages in xylans.. It functions in the pathway glycan degradation; xylan degradation. The polypeptide is Endo-1,4-beta-xylanase A (xynA) (Bacillus pumilus (Bacillus mesentericus)).